The following is a 241-amino-acid chain: Orotidine 5'-phosphate decarboxylase (241 aa).

Substrate contacts are provided by residues aspartate 15, lysine 37, 64 to 73 (DLKYHDIPNT), threonine 126, arginine 187, glutamine 196, glycine 216, and arginine 217. Lysine 66 functions as the Proton donor in the catalytic mechanism.

The protein belongs to the OMP decarboxylase family. Type 1 subfamily. As to quaternary structure, homodimer.

The enzyme catalyses orotidine 5'-phosphate + H(+) = UMP + CO2. Its pathway is pyrimidine metabolism; UMP biosynthesis via de novo pathway; UMP from orotate: step 2/2. In terms of biological role, catalyzes the decarboxylation of orotidine 5'-monophosphate (OMP) to uridine 5'-monophosphate (UMP). The polypeptide is Orotidine 5'-phosphate decarboxylase (Geotalea uraniireducens (strain Rf4) (Geobacter uraniireducens)).